The following is a 294-amino-acid chain: GDP-6-deoxy-D-talose 4-dehydrogenase (294 aa).

NAD(+) is bound by residues Phe11–Ile12, Asp38–Leu39, Leu60–Thr64, Thr104, Tyr128, Lys132, and Phe154. Residues Thr104 and Tyr128 each coordinate substrate. The active-site Proton acceptor is Tyr128. Substrate contacts are provided by Asn155 and Arg190.

The protein belongs to the NAD(P)-dependent epimerase/dehydratase family.

The enzyme catalyses GDP-6-deoxy-alpha-D-talose + NAD(+) = GDP-4-dehydro-alpha-D-rhamnose + NADH + H(+). It carries out the reaction GDP-6-deoxy-alpha-D-talose + NADP(+) = GDP-4-dehydro-alpha-D-rhamnose + NADPH + H(+). The protein operates within bacterial outer membrane biogenesis; LPS O-antigen biosynthesis. Functionally, catalyzes the conversion of GDP-4-dehydro-6-deoxy-D-mannose to GDP-6-deoxy-D-talose. The sequence is that of GDP-6-deoxy-D-talose 4-dehydrogenase (tld) from Aggregatibacter actinomycetemcomitans (Actinobacillus actinomycetemcomitans).